The following is a 313-amino-acid chain: Serine/threonine-protein phosphatase PP2A-4 catalytic subunit (313 aa).

Mn(2+) contacts are provided by aspartate 61, histidine 63, aspartate 89, and asparagine 121. Catalysis depends on histidine 122, which acts as the Proton donor. Histidine 171 and histidine 245 together coordinate Mn(2+). Leucine 313 is subject to Leucine methyl ester.

The protein belongs to the PPP phosphatase family. PP-2A subfamily. PP2A consists of a common heterodimeric core enzyme, composed of a 36 kDa catalytic subunit (subunit C) and a 65 kDa constant regulatory subunit (subunit A), that associates with a variety of regulatory subunits such as subunits B (the R2/B/PR55/B55, R3/B''/PR72/PR130/PR59 and R5/B'/B56 families). Interacts with SIC/RON3. It depends on Mn(2+) as a cofactor. In terms of processing, reversibly methyl esterified on Leu-313 by leucine carboxyl methyltransferase 1 (LCMT1) and pectin methylesterase 1 (PME1). Carboxyl methylation influences the affinity of the catalytic subunit for the different regulatory subunits, thereby modulating the PP2A holoenzyme's substrate specificity, enzyme activity and cellular localization. Phosphorylation of either threonine (by autophosphorylation-activated protein kinase) or tyrosine results in inactivation of the phosphatase. Auto-dephosphorylation has been suggested as a mechanism for reactivation.

The protein localises to the cytoplasm. It catalyses the reaction O-phospho-L-seryl-[protein] + H2O = L-seryl-[protein] + phosphate. The catalysed reaction is O-phospho-L-threonyl-[protein] + H2O = L-threonyl-[protein] + phosphate. In terms of biological role, functions redundantly with PP2A3, and is involved in establishing auxin gradients, apical-basal axis of polarity and root and shoot apical meristem during embryogenesis. May dephosphorylate PIN1 and regulate its subcellular distribution for polar auxin transport. The holoenzyme composed of PP2AA1, PP2A4 and B'ZETA or B'ETA acts as a negative regulator of plant innate immunity by controlling BAK1 phosphorylation state and activation in surface-localized immune receptor complexes. The sequence is that of Serine/threonine-protein phosphatase PP2A-4 catalytic subunit from Arabidopsis thaliana (Mouse-ear cress).